Here is a 31-residue protein sequence, read N- to C-terminus: Cytochrome b6-f complex subunit 6 (31 aa).

The chain crosses the membrane as a helical span at residues Leu4–Gly24.

It belongs to the PetL family. The 4 large subunits of the cytochrome b6-f complex are cytochrome b6, subunit IV (17 kDa polypeptide, PetD), cytochrome f and the Rieske protein, while the 4 small subunits are PetG, PetL, PetM and PetN. The complex functions as a dimer.

The protein localises to the plastid. It is found in the chloroplast thylakoid membrane. Its function is as follows. Component of the cytochrome b6-f complex, which mediates electron transfer between photosystem II (PSII) and photosystem I (PSI), cyclic electron flow around PSI, and state transitions. PetL is important for photoautotrophic growth as well as for electron transfer efficiency and stability of the cytochrome b6-f complex. The sequence is that of Cytochrome b6-f complex subunit 6 from Agrostis stolonifera (Creeping bentgrass).